A 364-amino-acid polypeptide reads, in one-letter code: DNA polymerase IV (364 aa).

The 181-residue stretch at 6-186 folds into the UmuC domain; the sequence is IIHIDMDAFY…LPIESFWGVG (181 aa). The Mg(2+) site is built by Asp-10 and Asp-104. Glu-105 is a catalytic residue.

It belongs to the DNA polymerase type-Y family. In terms of assembly, monomer. Mg(2+) serves as cofactor.

The protein resides in the cytoplasm. It carries out the reaction DNA(n) + a 2'-deoxyribonucleoside 5'-triphosphate = DNA(n+1) + diphosphate. Its function is as follows. Poorly processive, error-prone DNA polymerase involved in untargeted mutagenesis. Copies undamaged DNA at stalled replication forks, which arise in vivo from mismatched or misaligned primer ends. These misaligned primers can be extended by PolIV. Exhibits no 3'-5' exonuclease (proofreading) activity. May be involved in translesional synthesis, in conjunction with the beta clamp from PolIII. In Bacteroides fragilis (strain YCH46), this protein is DNA polymerase IV.